The following is a 152-amino-acid chain: Protein-export protein SecB (152 aa).

The protein belongs to the SecB family. In terms of assembly, homotetramer, a dimer of dimers. One homotetramer interacts with 1 SecA dimer.

It localises to the cytoplasm. One of the proteins required for the normal export of preproteins out of the cell cytoplasm. It is a molecular chaperone that binds to a subset of precursor proteins, maintaining them in a translocation-competent state. It also specifically binds to its receptor SecA. The protein is Protein-export protein SecB of Rickettsia rickettsii (strain Iowa).